Here is a 421-residue protein sequence, read N- to C-terminus: MSAYSMLSERIAMAKELIKRAESLSRSKKGGIEGGAKLCSKLKSELKFLQKIESGKVAIKESHLQSTNLTHLKAIVESAENLEEVVSVLRVFGYTDSLGEKQTLVVDVVANGGHTWVKAIGRKAEALHNIWLGRGQYGDKSIIEQAEDFLQASRQQPVQYSNPHIVFAFYNSVSSPMADKLKDMGISVRGDIVAVNSLLNHPEEYLLSESESDDEGQELLQVTRVDLDNVLARVAFPTEIKVDVCRRVNLDITTLITYVSAMSYGGCHFIFKEKVLTEQAEQERKERVLPQLEAFMKDKELFACESAVKDFQSILDTLGGPGERERAAVLIKRINVVPDQPSERALKLVASSKINSRSLTIFGTGDTLKAITMTANSGFVRAANNQGVKFSVFIHQPRALTESKEALAVPLPKARTNDSAH.

It belongs to the UPF0415 family.

The polypeptide is UPF0415 protein C7orf25 homolog (Rattus norvegicus (Rat)).